The chain runs to 413 residues: Sensor protein SphS (413 aa).

The 223-residue stretch at 176–398 folds into the Histidine kinase domain; it reads DVAHELKTPL…WLRVQLPQEP (223 aa). The residue at position 179 (His179) is a Phosphohistidine; by autocatalysis.

It localises to the cytoplasm. The catalysed reaction is ATP + protein L-histidine = ADP + protein N-phospho-L-histidine.. In terms of biological role, member of the two-component regulatory system SphR/SphS. Sensory kinase. Is involved in inducible production of alkaline phosphatase in response to phosphate limitation as it is directly involved in the regulation of phoA transcription in response to phosphate limitation. SphS functions as a protein kinase that phosphorylates SphR. This is Sensor protein SphS (sphS) from Synechococcus elongatus (strain ATCC 33912 / PCC 7942 / FACHB-805) (Anacystis nidulans R2).